Here is a 144-residue protein sequence, read N- to C-terminus: Cytochrome c oxidase subunit 4 isoform 1, mitochondrial (144 aa).

At 1-73 (SVVKSEDYAL…SFAEMNRGSN (73 aa)) the chain is on the mitochondrial matrix side. An N6-acetyllysine; alternate modification is found at Lys4. Lys4 carries the post-translational modification N6-succinyllysine; alternate. Phosphoserine occurs at positions 31 and 33. Lys35 is modified (N6-acetyllysine; alternate). Lys35 carries the N6-succinyllysine; alternate modification. Lys42 bears the N6-acetyllysine mark. A helical transmembrane segment spans residues 74-99 (EWKTVVGAAMFFIGFTAILIILEKRY). Residues 100 to 144 (VYGPLPHTFDKEWVAMQTKRMLDLKVNPVDGLASKWDYDKKEWKK) lie on the Mitochondrial intermembrane side of the membrane.

Belongs to the cytochrome c oxidase IV family. Component of the cytochrome c oxidase (complex IV, CIV), a multisubunit enzyme composed of 14 subunits. The complex is composed of a catalytic core of 3 subunits MT-CO1, MT-CO2 and MT-CO3, encoded in the mitochondrial DNA, and 11 supernumerary subunits COX4I, COX5A, COX5B, COX6A, COX6B, COX6C, COX7A, COX7B, COX7C, COX8 and NDUFA4, which are encoded in the nuclear genome. The complex exists as a monomer or a dimer and forms supercomplexes (SCs) in the inner mitochondrial membrane with NADH-ubiquinone oxidoreductase (complex I, CI) and ubiquinol-cytochrome c oxidoreductase (cytochrome b-c1 complex, complex III, CIII), resulting in different assemblies (supercomplex SCI(1)III(2)IV(1) and megacomplex MCI(2)III(2)IV(2)). Interacts with PHB2; the interaction decreases in absence of SPHK2. Interacts with AFG1L. Interacts with ABCB7; this interaction allows the regulation of cellular iron homeostasis and cellular reactive oxygen species (ROS) levels in cardiomyocytes. Interacts with FLVCR2; this interaction occurs in the absence of heme and is disrupted upon heme binding. Interacts with IRGC.

The protein localises to the mitochondrion inner membrane. It functions in the pathway energy metabolism; oxidative phosphorylation. Component of the cytochrome c oxidase, the last enzyme in the mitochondrial electron transport chain which drives oxidative phosphorylation. The respiratory chain contains 3 multisubunit complexes succinate dehydrogenase (complex II, CII), ubiquinol-cytochrome c oxidoreductase (cytochrome b-c1 complex, complex III, CIII) and cytochrome c oxidase (complex IV, CIV), that cooperate to transfer electrons derived from NADH and succinate to molecular oxygen, creating an electrochemical gradient over the inner membrane that drives transmembrane transport and the ATP synthase. Cytochrome c oxidase is the component of the respiratory chain that catalyzes the reduction of oxygen to water. Electrons originating from reduced cytochrome c in the intermembrane space (IMS) are transferred via the dinuclear copper A center (CU(A)) of subunit 2 and heme A of subunit 1 to the active site in subunit 1, a binuclear center (BNC) formed by heme A3 and copper B (CU(B)). The BNC reduces molecular oxygen to 2 water molecules using 4 electrons from cytochrome c in the IMS and 4 protons from the mitochondrial matrix. The protein is Cytochrome c oxidase subunit 4 isoform 1, mitochondrial (COX4I1) of Aotus azarae (Azara's night monkey).